The following is a 210-amino-acid chain: Probable nicotinate-nucleotide adenylyltransferase (210 aa).

It belongs to the NadD family.

It catalyses the reaction nicotinate beta-D-ribonucleotide + ATP + H(+) = deamido-NAD(+) + diphosphate. Its pathway is cofactor biosynthesis; NAD(+) biosynthesis; deamido-NAD(+) from nicotinate D-ribonucleotide: step 1/1. In terms of biological role, catalyzes the reversible adenylation of nicotinate mononucleotide (NaMN) to nicotinic acid adenine dinucleotide (NaAD). The chain is Probable nicotinate-nucleotide adenylyltransferase from Streptococcus pyogenes serotype M6 (strain ATCC BAA-946 / MGAS10394).